We begin with the raw amino-acid sequence, 422 residues long: MRVLVIGSGAREHALLLALSRDPQVKGLVVAPGNAGTARLAEQYDVDISSGEDIVALARDVRADMVVIGPELPLVLGVADAVRAAGIVCFGPSKDAARIEGSKAFAKEVMAAAGVRTSRSEIVNSPARLDAALDRFGPPVGDLSWVVKDDRLAAGKGVVVTSDRDVARTHAAGLLEAGHPVLLESYLDGPEVSLFCVVDGRTVLPLLPAQDFKRVGEGDTGPNTGGMGAYAPLPWLPDEVCQQALTSIVEPVAAELVQRGSPFRGLLYVGLAVTASGPAVVEFNCRFGDPETQVVLALLDSPLGQLLYAAGTGSLADFGELHWRSGAAVAVVLAAENYPRRPRVGDIVFGSEIEGVLHAGTTRRDDGVIVSSGGRVLSVVATGDDLSAARSQAYRIIGSIRLLGSHFRKDIGFSAAKGRIHI.

An ATP-grasp domain is found at 107-312 (KEVMAAAGVR…LGQLLYAAGT (206 aa)). Residue 138–193 (PPVGDLSWVVKDDRLAAGKGVVVTSDRDVARTHAAGLLEAGHPVLLESYLDGPEVS) coordinates ATP. Mg(2+) contacts are provided by glutamate 282 and asparagine 284.

Belongs to the GARS family. Mg(2+) is required as a cofactor. It depends on Mn(2+) as a cofactor.

The catalysed reaction is 5-phospho-beta-D-ribosylamine + glycine + ATP = N(1)-(5-phospho-beta-D-ribosyl)glycinamide + ADP + phosphate + H(+). It participates in purine metabolism; IMP biosynthesis via de novo pathway; N(1)-(5-phospho-D-ribosyl)glycinamide from 5-phospho-alpha-D-ribose 1-diphosphate: step 2/2. This chain is Phosphoribosylamine--glycine ligase, found in Mycobacterium leprae (strain TN).